We begin with the raw amino-acid sequence, 89 residues long: Small ribosomal subunit protein uS15 (89 aa).

The protein belongs to the universal ribosomal protein uS15 family. Part of the 30S ribosomal subunit. Forms a bridge to the 50S subunit in the 70S ribosome, contacting the 23S rRNA.

Functionally, one of the primary rRNA binding proteins, it binds directly to 16S rRNA where it helps nucleate assembly of the platform of the 30S subunit by binding and bridging several RNA helices of the 16S rRNA. In terms of biological role, forms an intersubunit bridge (bridge B4) with the 23S rRNA of the 50S subunit in the ribosome. The sequence is that of Small ribosomal subunit protein uS15 from Shewanella loihica (strain ATCC BAA-1088 / PV-4).